The sequence spans 350 residues: Hydroxymethylglutaryl-CoA synthase (350 aa).

Residue Glu-83 is the Proton donor/acceptor of the active site. The active-site Acyl-thioester intermediate is the Cys-115. Residues Cys-115 and Thr-156 each coordinate (3S)-3-hydroxy-3-methylglutaryl-CoA. Residue Arg-204 participates in CoA binding. The (3S)-3-hydroxy-3-methylglutaryl-CoA site is built by Thr-206 and His-239. His-239 functions as the Proton donor/acceptor in the catalytic mechanism. Position 244 (Lys-244) interacts with CoA. (3S)-3-hydroxy-3-methylglutaryl-CoA is bound by residues Asn-271 and Ser-301.

Belongs to the thiolase-like superfamily. Archaeal HMG-CoA synthase family. Interacts with acetoacetyl-CoA thiolase that catalyzes the precedent step in the pathway and with a DUF35 protein. The acetoacetyl-CoA thiolase/HMG-CoA synthase complex channels the intermediate via a fused CoA-binding site, which allows for efficient coupling of the endergonic thiolase reaction with the exergonic HMGCS reaction.

The enzyme catalyses acetoacetyl-CoA + acetyl-CoA + H2O = (3S)-3-hydroxy-3-methylglutaryl-CoA + CoA + H(+). Its pathway is metabolic intermediate biosynthesis; (R)-mevalonate biosynthesis; (R)-mevalonate from acetyl-CoA: step 2/3. Functionally, catalyzes the condensation of acetyl-CoA with acetoacetyl-CoA to form 3-hydroxy-3-methylglutaryl-CoA (HMG-CoA). Functions in the mevalonate (MVA) pathway leading to isopentenyl diphosphate (IPP), a key precursor for the biosynthesis of isoprenoid compounds that are building blocks of archaeal membrane lipids. The sequence is that of Hydroxymethylglutaryl-CoA synthase from Thermococcus onnurineus (strain NA1).